Consider the following 192-residue polypeptide: Transmembrane protein 276 (192 aa).

A signal peptide spans 1-32; that stretch reads MVSKPRNEWSTALSHLVLAGVSLHAAVSSVQS. 4 consecutive transmembrane segments (helical) span residues 35-55, 63-83, 92-112, and 114-134; these read GAAA…APEL, AGAW…FHWV, LLLG…PEGC, and VAGQ…AVFT.

It localises to the membrane. The polypeptide is Transmembrane protein 276 (Rattus norvegicus (Rat)).